Here is a 139-residue protein sequence, read N- to C-terminus: Large ribosomal subunit protein bL17 (139 aa).

Belongs to the bacterial ribosomal protein bL17 family. As to quaternary structure, part of the 50S ribosomal subunit. Contacts protein L32.

The sequence is that of Large ribosomal subunit protein bL17 from Cereibacter sphaeroides (strain ATCC 17029 / ATH 2.4.9) (Rhodobacter sphaeroides).